We begin with the raw amino-acid sequence, 103 residues long: Large ribosomal subunit protein bL21 (103 aa).

Belongs to the bacterial ribosomal protein bL21 family. As to quaternary structure, part of the 50S ribosomal subunit. Contacts protein L20.

In terms of biological role, this protein binds to 23S rRNA in the presence of protein L20. The polypeptide is Large ribosomal subunit protein bL21 (Klebsiella pneumoniae (strain 342)).